The chain runs to 282 residues: Transformer-2 protein homolog alpha (282 aa).

The tract at residues 1–118 (MSDVEENNFE…TGSRANPDPN (118 aa)) is disordered. Ser2 bears the N-acetylserine mark. Phosphoserine occurs at positions 2 and 14. Thr24 carries the post-translational modification Phosphothreonine. A compositionally biased stretch (basic residues) spans 51–84 (RSRSKSRSRSRRHSHRRYTRSRSHSHSHRRRSRS). Residues Ser82, Ser84, and Ser86 each carry the phosphoserine modification. Thr88 carries the post-translational modification Phosphothreonine. Positions 92–110 (RRRRSRSHSPMSNRRRHTG) are enriched in basic residues. A phosphoserine mark is found at Ser96 and Ser98. An RRM domain is found at 119 to 197 (TCLGVFGLSL…RRIRVDYSIT (79 aa)). Lys198 participates in a covalent cross-link: Glycyl lysine isopeptide (Lys-Gly) (interchain with G-Cter in SUMO2). Positions 198-225 (KRAHTPTPGIYMGRPTHSGGGGGGGGGG) are linker. Disordered regions lie at residues 201–245 (HTPT…YDRG) and 260–282 (SPSPYYSRYRSRSRSRSYSPRRY). 2 positions are modified to phosphothreonine: Thr202 and Thr204. The span at 215-230 (SGGGGGGGGGGGGGGG) shows a compositional bias: gly residues. Residue Arg232 is modified to Omega-N-methylarginine. Basic and acidic residues predominate over residues 232-245 (RRRDSYYDRGYDRG). Ser236 is subject to Phosphoserine. Over residues 268-282 (YRSRSRSRSYSPRRY) the composition is skewed to basic residues.

This sequence belongs to the splicing factor SR family. In terms of assembly, binds to A3 enhancer proteins SRp75, SRp55, SRp40 and SRp30. Interacts with ILDR1 (via C-terminus) and ILDR2. Phosphorylated in the RS domains.

It localises to the nucleus. Functionally, sequence-specific RNA-binding protein which participates in the control of pre-mRNA splicing. The chain is Transformer-2 protein homolog alpha from Homo sapiens (Human).